The primary structure comprises 467 residues: Asparagine--tRNA ligase (467 aa).

Belongs to the class-II aminoacyl-tRNA synthetase family. In terms of assembly, homodimer.

It is found in the cytoplasm. The catalysed reaction is tRNA(Asn) + L-asparagine + ATP = L-asparaginyl-tRNA(Asn) + AMP + diphosphate + H(+). The sequence is that of Asparagine--tRNA ligase from Haemophilus influenzae (strain ATCC 51907 / DSM 11121 / KW20 / Rd).